A 265-amino-acid polypeptide reads, in one-letter code: 5'-nucleotidase SurE (265 aa).

Aspartate 8, aspartate 9, serine 40, and asparagine 98 together coordinate a divalent metal cation.

The protein belongs to the SurE nucleotidase family. It depends on a divalent metal cation as a cofactor.

The protein resides in the cytoplasm. The catalysed reaction is a ribonucleoside 5'-phosphate + H2O = a ribonucleoside + phosphate. Its function is as follows. Nucleotidase that shows phosphatase activity on nucleoside 5'-monophosphates. This chain is 5'-nucleotidase SurE, found in Thermosynechococcus vestitus (strain NIES-2133 / IAM M-273 / BP-1).